Here is a 422-residue protein sequence, read N- to C-terminus: Histidine--tRNA ligase (422 aa).

Belongs to the class-II aminoacyl-tRNA synthetase family. Homodimer.

The protein resides in the cytoplasm. It carries out the reaction tRNA(His) + L-histidine + ATP = L-histidyl-tRNA(His) + AMP + diphosphate + H(+). The chain is Histidine--tRNA ligase from Vesicomyosocius okutanii subsp. Calyptogena okutanii (strain HA).